Here is a 463-residue protein sequence, read N- to C-terminus: Membrane-bound lytic murein transglycosylase F (463 aa).

The N-terminal stretch at Met-1–Ala-33 is a signal peptide. The non-LT domain stretch occupies residues Leu-34 to Ile-272. An LT domain region spans residues Arg-273 to Ile-463. Glu-317 is an active-site residue.

In the N-terminal section; belongs to the bacterial solute-binding protein 3 family. The protein in the C-terminal section; belongs to the transglycosylase Slt family.

It localises to the cell outer membrane. It carries out the reaction Exolytic cleavage of the (1-&gt;4)-beta-glycosidic linkage between N-acetylmuramic acid (MurNAc) and N-acetylglucosamine (GlcNAc) residues in peptidoglycan, from either the reducing or the non-reducing ends of the peptidoglycan chains, with concomitant formation of a 1,6-anhydrobond in the MurNAc residue.. Murein-degrading enzyme that degrades murein glycan strands and insoluble, high-molecular weight murein sacculi, with the concomitant formation of a 1,6-anhydromuramoyl product. Lytic transglycosylases (LTs) play an integral role in the metabolism of the peptidoglycan (PG) sacculus. Their lytic action creates space within the PG sacculus to allow for its expansion as well as for the insertion of various structures such as secretion systems and flagella. This chain is Membrane-bound lytic murein transglycosylase F, found in Alteromonas mediterranea (strain DSM 17117 / CIP 110805 / LMG 28347 / Deep ecotype).